A 312-amino-acid polypeptide reads, in one-letter code: Malate dehydrogenase (312 aa).

NAD(+)-binding positions include Gly-7–Gly-13 and Asp-34. Substrate is bound by residues Arg-81 and Arg-87. Residues Asn-94 and Ile-117 to Asn-119 contribute to the NAD(+) site. Positions 119 and 153 each coordinate substrate. The Proton acceptor role is filled by His-177. Met-227 is a binding site for NAD(+).

It belongs to the LDH/MDH superfamily. MDH type 1 family. In terms of assembly, homodimer.

It carries out the reaction (S)-malate + NAD(+) = oxaloacetate + NADH + H(+). Functionally, catalyzes the reversible oxidation of malate to oxaloacetate. The protein is Malate dehydrogenase of Salmonella arizonae (strain ATCC BAA-731 / CDC346-86 / RSK2980).